A 289-amino-acid polypeptide reads, in one-letter code: Serine/threonine-protein phosphatase Pgam5, mitochondrial (289 aa).

Residues 7–23 (LVCGAGAGLAAFYLSRL) traverse the membrane as a helical segment.

This sequence belongs to the phosphoglycerate mutase family. BPG-dependent PGAM subfamily. In terms of assembly, interacts with Pk92B/ASK1.

It is found in the mitochondrion outer membrane. The catalysed reaction is O-phospho-L-seryl-[protein] + H2O = L-seryl-[protein] + phosphate. It carries out the reaction O-phospho-L-threonyl-[protein] + H2O = L-threonyl-[protein] + phosphate. Displays phosphatase activity for serine/threonine residues, and dephosphorylates and activates Pk92B kinase. Has apparently no phosphoglycerate mutase activity. The chain is Serine/threonine-protein phosphatase Pgam5, mitochondrial from Drosophila ananassae (Fruit fly).